A 429-amino-acid polypeptide reads, in one-letter code: SH2 domain-containing protein 5 (429 aa).

One can recognise an SH2 domain in the interval 302–398; that stretch reads WAFAGLSRSC…LSMGRLNPTY (97 aa).

In terms of assembly, interacts with BCR. In terms of tissue distribution, highly expressed in brain, particularly in Purkinjie cells in the cerebellum and the cornu ammonis of the hippocampus.

The protein localises to the postsynaptic density. Its function is as follows. May be involved in synaptic plasticity regulation through the control of Rac-GTP levels. The sequence is that of SH2 domain-containing protein 5 from Mus musculus (Mouse).